The primary structure comprises 170 residues: Inner membrane protein p22 (170 aa).

The Intravirion portion of the chain corresponds to 1–3; that stretch reads MST. Residues 4 to 24 traverse the membrane as a helical segment; sequence LLIALIALIVLLIIILVVFLY. Residues 25–170 are Virion surface-facing; the sequence is YKKQQPPKKV…LYLPRNHKYA (146 aa).

It belongs to the asfivirus inner membrane protein p22 family.

It localises to the virion membrane. Its subcellular location is the host cell membrane. This is Inner membrane protein p22 from Ornithodoros (relapsing fever ticks).